Consider the following 293-residue polypeptide: Ribosomal protein L11 methyltransferase (293 aa).

4 residues coordinate S-adenosyl-L-methionine: Thr145, Gly166, Asp188, and Asn230.

The protein belongs to the methyltransferase superfamily. PrmA family.

The protein localises to the cytoplasm. The catalysed reaction is L-lysyl-[protein] + 3 S-adenosyl-L-methionine = N(6),N(6),N(6)-trimethyl-L-lysyl-[protein] + 3 S-adenosyl-L-homocysteine + 3 H(+). Functionally, methylates ribosomal protein L11. This is Ribosomal protein L11 methyltransferase from Sodalis glossinidius (strain morsitans).